Here is a 225-residue protein sequence, read N- to C-terminus: 3-dehydroquinate dehydratase (225 aa).

3-dehydroquinate-binding positions include 30-32 and Arg62; that span reads EWR. The active-site Proton donor/acceptor is the His118. Residue Lys143 is the Schiff-base intermediate with substrate of the active site. 3-dehydroquinate contacts are provided by Arg186, Ser205, and Gln209.

The protein belongs to the type-I 3-dehydroquinase family. As to quaternary structure, homodimer.

The catalysed reaction is 3-dehydroquinate = 3-dehydroshikimate + H2O. The protein operates within metabolic intermediate biosynthesis; chorismate biosynthesis; chorismate from D-erythrose 4-phosphate and phosphoenolpyruvate: step 3/7. Involved in the third step of the chorismate pathway, which leads to the biosynthesis of aromatic amino acids. Catalyzes the cis-dehydration of 3-dehydroquinate (DHQ) and introduces the first double bond of the aromatic ring to yield 3-dehydroshikimate. In Streptococcus mutans serotype c (strain ATCC 700610 / UA159), this protein is 3-dehydroquinate dehydratase.